Consider the following 163-residue polypeptide: Pheromone-binding protein 1 (163 aa).

Residues 1-21 (MLGKISLLLLPVFVAINLVHS) form the signal peptide. Cystine bridges form between Cys40–Cys75, Cys71–Cys129, and Cys118–Cys138.

It belongs to the PBP/GOBP family. As to expression, antenna.

Its function is as follows. This major soluble protein in olfactory sensilla of male moths might serve to solubilize the extremely hydrophobic pheromone molecules and to transport pheromone through the aqueous lymph to receptors located on olfactory cilia. In Antheraea pernyi (Chinese oak silk moth), this protein is Pheromone-binding protein 1.